We begin with the raw amino-acid sequence, 452 residues long: Ribosomal protein uS12 methylthiotransferase RimO (452 aa).

One can recognise an MTTase N-terminal domain in the interval proline 5–serine 116. Residues cysteine 14, cysteine 50, cysteine 79, cysteine 154, cysteine 158, and cysteine 161 each coordinate [4Fe-4S] cluster. The Radical SAM core domain maps to threonine 140 to arginine 369. Residues arginine 372–serine 438 form the TRAM domain.

This sequence belongs to the methylthiotransferase family. RimO subfamily. The cofactor is [4Fe-4S] cluster.

Its subcellular location is the cytoplasm. It carries out the reaction L-aspartate(89)-[ribosomal protein uS12]-hydrogen + (sulfur carrier)-SH + AH2 + 2 S-adenosyl-L-methionine = 3-methylsulfanyl-L-aspartate(89)-[ribosomal protein uS12]-hydrogen + (sulfur carrier)-H + 5'-deoxyadenosine + L-methionine + A + S-adenosyl-L-homocysteine + 2 H(+). Its function is as follows. Catalyzes the methylthiolation of an aspartic acid residue of ribosomal protein uS12. The sequence is that of Ribosomal protein uS12 methylthiotransferase RimO from Synechococcus sp. (strain ATCC 27144 / PCC 6301 / SAUG 1402/1) (Anacystis nidulans).